A 348-amino-acid polypeptide reads, in one-letter code: Dihydroorotase (348 aa).

Residues His-17 and His-19 each contribute to the Zn(2+) site. Substrate-binding positions include 19-21 and Asn-45; that span reads HLR. Zn(2+)-binding residues include Lys-103, His-140, and His-178. Lys-103 bears the N6-carboxylysine mark. His-140 serves as a coordination point for substrate. Residue Leu-223 participates in substrate binding. Zn(2+) is bound at residue Asp-251. Residue Asp-251 is part of the active site. Substrate is bound by residues His-255 and Ala-267.

Belongs to the metallo-dependent hydrolases superfamily. DHOase family. Class II DHOase subfamily. In terms of assembly, homodimer. Requires Zn(2+) as cofactor.

The enzyme catalyses (S)-dihydroorotate + H2O = N-carbamoyl-L-aspartate + H(+). Its pathway is pyrimidine metabolism; UMP biosynthesis via de novo pathway; (S)-dihydroorotate from bicarbonate: step 3/3. In terms of biological role, catalyzes the reversible cyclization of carbamoyl aspartate to dihydroorotate. The polypeptide is Dihydroorotase (Shigella boydii serotype 18 (strain CDC 3083-94 / BS512)).